Consider the following 558-residue polypeptide: Eukaryotic translation initiation factor 3 subunit D (558 aa).

Residues 296-310 (EFDLLTVNETSVEPP) form an RNA gate region. The disordered stretch occupies residues 534–558 (DNTFESEGEEEDSDEEEQVKDAFQR). Acidic residues predominate over residues 537 to 551 (FESEGEEEDSDEEEQ).

It belongs to the eIF-3 subunit D family. Component of the eukaryotic translation initiation factor 3 (eIF-3) complex.

The protein localises to the cytoplasm. Functionally, mRNA cap-binding component of the eukaryotic translation initiation factor 3 (eIF-3) complex, which is involved in protein synthesis of a specialized repertoire of mRNAs and, together with other initiation factors, stimulates binding of mRNA and methionyl-tRNAi to the 40S ribosome. The eIF-3 complex specifically targets and initiates translation of a subset of mRNAs involved in cell proliferation. In the eIF-3 complex, eif3d specifically recognizes and binds the 7-methylguanosine cap of a subset of mRNAs. This Nasonia vitripennis (Parasitic wasp) protein is Eukaryotic translation initiation factor 3 subunit D.